The primary structure comprises 275 residues: 3-methyl-2-oxobutanoate hydroxymethyltransferase (275 aa).

Asp49 and Asp88 together coordinate Mg(2+). Residues 49–50 (DS), Asp88, and Lys118 each bind 3-methyl-2-oxobutanoate. Position 120 (Glu120) interacts with Mg(2+). Catalysis depends on Glu187, which acts as the Proton acceptor.

This sequence belongs to the PanB family. As to quaternary structure, homodecamer; pentamer of dimers. The cofactor is Mg(2+).

It localises to the cytoplasm. The enzyme catalyses 3-methyl-2-oxobutanoate + (6R)-5,10-methylene-5,6,7,8-tetrahydrofolate + H2O = 2-dehydropantoate + (6S)-5,6,7,8-tetrahydrofolate. It functions in the pathway cofactor biosynthesis; (R)-pantothenate biosynthesis; (R)-pantoate from 3-methyl-2-oxobutanoate: step 1/2. Catalyzes the reversible reaction in which hydroxymethyl group from 5,10-methylenetetrahydrofolate is transferred onto alpha-ketoisovalerate to form ketopantoate. This Bartonella quintana (strain Toulouse) (Rochalimaea quintana) protein is 3-methyl-2-oxobutanoate hydroxymethyltransferase.